A 69-amino-acid chain; its full sequence is Conotoxin LvVID (69 aa).

The signal sequence occupies residues 1–17 (VLIIAVLFLTACQLTTA). Positions 18–40 (ETYPRGQQRHHALRSTDKNSKLT) are excised as a propeptide. 3 cysteine pairs are disulfide-bonded: Cys-43–Cys-57, Cys-50–Cys-61, and Cys-56–Cys-68.

Belongs to the conotoxin O1 superfamily. Expressed by the venom duct.

It localises to the secreted. This Conus lividus (Livid cone) protein is Conotoxin LvVID.